The following is a 394-amino-acid chain: Phosphoglycerate kinase (394 aa).

Residues 21 to 23, Arg-36, 60 to 63, Arg-114, and Arg-147 contribute to the substrate site; these read DLN and HLGN. ATP contacts are provided by residues Lys-198, Glu-315, and 341 to 344; that span reads GGET.

Belongs to the phosphoglycerate kinase family. As to quaternary structure, monomer.

It localises to the cytoplasm. The enzyme catalyses (2R)-3-phosphoglycerate + ATP = (2R)-3-phospho-glyceroyl phosphate + ADP. It functions in the pathway carbohydrate degradation; glycolysis; pyruvate from D-glyceraldehyde 3-phosphate: step 2/5. This Wigglesworthia glossinidia brevipalpis protein is Phosphoglycerate kinase.